A 312-amino-acid chain; its full sequence is tRNA-cytidine(32) 2-sulfurtransferase (312 aa).

A PP-loop motif motif is present at residues Ser47–Ser52. [4Fe-4S] cluster is bound by residues Cys122, Cys125, and Cys213.

It belongs to the TtcA family. As to quaternary structure, homodimer. The cofactor is Mg(2+). Requires [4Fe-4S] cluster as cofactor.

Its subcellular location is the cytoplasm. It catalyses the reaction cytidine(32) in tRNA + S-sulfanyl-L-cysteinyl-[cysteine desulfurase] + AH2 + ATP = 2-thiocytidine(32) in tRNA + L-cysteinyl-[cysteine desulfurase] + A + AMP + diphosphate + H(+). It functions in the pathway tRNA modification. Functionally, catalyzes the ATP-dependent 2-thiolation of cytidine in position 32 of tRNA, to form 2-thiocytidine (s(2)C32). The sulfur atoms are provided by the cysteine/cysteine desulfurase (IscS) system. This chain is tRNA-cytidine(32) 2-sulfurtransferase, found in Actinobacillus succinogenes (strain ATCC 55618 / DSM 22257 / CCUG 43843 / 130Z).